A 207-amino-acid polypeptide reads, in one-letter code: Metalloproteinase inhibitor 1 (207 aa).

The first 23 residues, 1–23 (MAPLAALASSMLLLLWLVAPSRA), serve as a signal peptide directing secretion. Cysteine 24 provides a ligand contact to Zn(2+). Residues 24-27 (CTCV) are involved in metalloproteinase-binding. 6 disulfide bridges follow: cysteine 24–cysteine 93, cysteine 26–cysteine 122, cysteine 36–cysteine 147, cysteine 150–cysteine 197, cysteine 155–cysteine 160, and cysteine 168–cysteine 189. Residues 24–147 (CTCVPPHPQT…GFTKTYAAGC (124 aa)) form the NTR domain. N-linked (GlcNAc...) asparagine glycosylation occurs at asparagine 53. The involved in metalloproteinase-binding stretch occupies residues 90 to 91 (ES). A glycan (N-linked (GlcNAc...) asparagine) is linked at asparagine 101. The residue at position 178 (serine 178) is a Phosphoserine.

Belongs to the protease inhibitor I35 (TIMP) family. Interacts with MMP1, MMP3, MMP10 and MMP13, but has only very low affinity for MMP14. Interacts with CD63; identified in a complex with CD63 and ITGB1. The activity of TIMP1 is dependent on the presence of disulfide bonds. In terms of processing, N-glycosylated.

It localises to the secreted. In terms of biological role, metalloproteinase inhibitor that functions by forming one to one complexes with target metalloproteinases, such as collagenases, and irreversibly inactivates them by binding to their catalytic zinc cofactor. Acts on MMP1, MMP2, MMP3, MMP7, MMP8, MMP9, MMP10, MMP11, MMP12, MMP13 and MMP16. Does not act on MMP14. Also functions as a growth factor that regulates cell differentiation, migration and cell death and activates cellular signaling cascades via CD63 and ITGB1. Plays a role in integrin signaling. This is Metalloproteinase inhibitor 1 (TIMP1) from Oryctolagus cuniculus (Rabbit).